Consider the following 216-residue polypeptide: UPF0548 protein (216 aa).

It belongs to the UPF0548 family.

The sequence is that of UPF0548 protein from Dictyostelium discoideum (Social amoeba).